Consider the following 203-residue polypeptide: Large ribosomal subunit protein uL22 (203 aa).

2 stretches are compositionally biased toward polar residues: residues 116–126 (QNGGESQNQEY) and 134–167 (VSKS…DSQL). A disordered region spans residues 116-203 (QNGGESQNQE…TVLAQEKEVK (88 aa)). Positions 168-194 (SAKTNSTTTAKKTDLADNNTKNDATNT) are enriched in low complexity.

The protein belongs to the universal ribosomal protein uL22 family. In terms of assembly, part of the 50S ribosomal subunit.

In terms of biological role, this protein binds specifically to 23S rRNA; its binding is stimulated by other ribosomal proteins, e.g. L4, L17, and L20. It is important during the early stages of 50S assembly. It makes multiple contacts with different domains of the 23S rRNA in the assembled 50S subunit and ribosome. Its function is as follows. The globular domain of the protein is located near the polypeptide exit tunnel on the outside of the subunit, while an extended beta-hairpin is found that lines the wall of the exit tunnel in the center of the 70S ribosome. This chain is Large ribosomal subunit protein uL22, found in Mesomycoplasma hyopneumoniae (strain 232) (Mycoplasma hyopneumoniae).